The sequence spans 205 residues: High frequency lysogenization protein HflD homolog (205 aa).

The protein belongs to the HflD family.

Its subcellular location is the cytoplasm. It is found in the cell inner membrane. This is High frequency lysogenization protein HflD homolog from Shewanella baltica (strain OS155 / ATCC BAA-1091).